The primary structure comprises 130 residues: Small ribosomal subunit protein uS11 (130 aa).

Belongs to the universal ribosomal protein uS11 family. In terms of assembly, part of the 30S ribosomal subunit. Interacts with proteins S7 and S18. Binds to IF-3.

Functionally, located on the platform of the 30S subunit, it bridges several disparate RNA helices of the 16S rRNA. Forms part of the Shine-Dalgarno cleft in the 70S ribosome. The sequence is that of Small ribosomal subunit protein uS11 from Dehalococcoides mccartyi (strain ATCC BAA-2100 / JCM 16839 / KCTC 5957 / BAV1).